Here is a 455-residue protein sequence, read N- to C-terminus: L-serine dehydratase 2 (455 aa).

Belongs to the iron-sulfur dependent L-serine dehydratase family. Requires [4Fe-4S] cluster as cofactor. In terms of processing, activated by post-translational modification by a system involving at least three gene products. Activation is mimicked in vitro by iron and dithiothreitol. There is considerable evidence for a free-radical activation mechanism.

It catalyses the reaction L-serine = pyruvate + NH4(+). The protein operates within carbohydrate biosynthesis; gluconeogenesis. Its function is as follows. Also deaminates threonine, particularly when it is present in high concentration. The chain is L-serine dehydratase 2 (sdaB) from Escherichia coli (strain K12).